Consider the following 200-residue polypeptide: Peptidyl-tRNA hydrolase (200 aa).

Tyr14 provides a ligand contact to tRNA. Catalysis depends on His19, which acts as the Proton acceptor. TRNA is bound by residues Phe64, Asn66, and Asn112.

It belongs to the PTH family. As to quaternary structure, monomer.

The protein resides in the cytoplasm. It carries out the reaction an N-acyl-L-alpha-aminoacyl-tRNA + H2O = an N-acyl-L-amino acid + a tRNA + H(+). Functionally, hydrolyzes ribosome-free peptidyl-tRNAs (with 1 or more amino acids incorporated), which drop off the ribosome during protein synthesis, or as a result of ribosome stalling. Its function is as follows. Catalyzes the release of premature peptidyl moieties from peptidyl-tRNA molecules trapped in stalled 50S ribosomal subunits, and thus maintains levels of free tRNAs and 50S ribosomes. The protein is Peptidyl-tRNA hydrolase of Maricaulis maris (strain MCS10) (Caulobacter maris).